Reading from the N-terminus, the 135-residue chain is Interleukin-4 (135 aa).

The signal sequence occupies residues 1 to 24; sequence MGLTYQLIPVLVCLLVCTSHFAHG. 3 cysteine pairs are disulfide-bonded: Cys27–Cys135, Cys48–Cys85, and Cys70–Cys105. N-linked (GlcNAc...) asparagine glycosylation occurs at Asn62.

It belongs to the IL-4/IL-13 family.

The protein localises to the secreted. Functionally, participates in at least several B-cell activation processes as well as of other cell types. It is a costimulator of DNA-synthesis. It induces the expression of class II MHC molecules on resting B-cells. It enhances both secretion and cell surface expression of IgE and IgG1. It also regulates the expression of the low affinity Fc receptor for IgE (CD23) on both lymphocytes and monocytes. Positively regulates IL31RA expression in macrophages. Stimulates autophagy in dendritic cells by interfering with mTORC1 signaling and through the induction of RUFY4. In Boselaphus tragocamelus (Nilgai), this protein is Interleukin-4 (IL4).